The following is a 1184-amino-acid chain: Nucleolar protein 6 (1184 aa).

The span at 1–10 shows a compositional bias: basic and acidic residues; that stretch reads MGRIKEKESK. 2 disordered regions span residues 1–42 and 1133–1184; these read MGRI…NRVP and REQR…NALC.

Belongs to the NRAP family. As to quaternary structure, part of the small subunit (SSU) processome, composed of more than 70 proteins and the RNA chaperone small nucleolar RNA (snoRNA) U3.

The protein resides in the nucleus. It localises to the nucleolus. Its subcellular location is the chromosome. Its function is as follows. Part of the small subunit (SSU) processome, first precursor of the small eukaryotic ribosomal subunit. During the assembly of the SSU processome in the nucleolus, many ribosome biogenesis factors, an RNA chaperone and ribosomal proteins associate with the nascent pre-rRNA and work in concert to generate RNA folding, modifications, rearrangements and cleavage as well as targeted degradation of pre-ribosomal RNA by the RNA exosome. The polypeptide is Nucleolar protein 6 (Drosophila virilis (Fruit fly)).